The following is a 186-amino-acid chain: Peptidyl-tRNA hydrolase (186 aa).

Tyr-14 serves as a coordination point for tRNA. His-19 acts as the Proton acceptor in catalysis. Tyr-61, Asn-63, and Asn-107 together coordinate tRNA.

Belongs to the PTH family. As to quaternary structure, monomer.

The protein localises to the cytoplasm. It carries out the reaction an N-acyl-L-alpha-aminoacyl-tRNA + H2O = an N-acyl-L-amino acid + a tRNA + H(+). Its function is as follows. Hydrolyzes ribosome-free peptidyl-tRNAs (with 1 or more amino acids incorporated), which drop off the ribosome during protein synthesis, or as a result of ribosome stalling. Catalyzes the release of premature peptidyl moieties from peptidyl-tRNA molecules trapped in stalled 50S ribosomal subunits, and thus maintains levels of free tRNAs and 50S ribosomes. In Helicobacter pylori (strain HPAG1), this protein is Peptidyl-tRNA hydrolase.